The sequence spans 174 residues: Shikimate kinase (174 aa).

Position 10–15 (10–15 (GSGKTA)) interacts with ATP. T14 contacts Mg(2+). Substrate contacts are provided by D32, R56, and G78. R118 lines the ATP pocket. Residue R137 coordinates substrate. R154 lines the ATP pocket.

Belongs to the shikimate kinase family. In terms of assembly, monomer. Mg(2+) serves as cofactor.

It localises to the cytoplasm. The catalysed reaction is shikimate + ATP = 3-phosphoshikimate + ADP + H(+). It functions in the pathway metabolic intermediate biosynthesis; chorismate biosynthesis; chorismate from D-erythrose 4-phosphate and phosphoenolpyruvate: step 5/7. Its function is as follows. Catalyzes the specific phosphorylation of the 3-hydroxyl group of shikimic acid using ATP as a cosubstrate. The protein is Shikimate kinase of Symbiobacterium thermophilum (strain DSM 24528 / JCM 14929 / IAM 14863 / T).